Consider the following 112-residue polypeptide: Divalent-cation tolerance protein CutA (112 aa).

Cu cation-binding residues include Cys16, His83, and His84.

This sequence belongs to the CutA family. In terms of assembly, homotrimer. The cofactor is Cu cation.

It localises to the cytoplasm. Functionally, involved in resistance toward heavy metals. The polypeptide is Divalent-cation tolerance protein CutA (Escherichia coli O81 (strain ED1a)).